We begin with the raw amino-acid sequence, 269 residues long: Mitochondrial scaffolding protein 1 (269 aa).

The PDZ domain maps to 49-121 (VVEIEKTSKG…HDEAVEVFRS (73 aa)). Positions 143-185 (RTQTPTASVSITPQVTPQTRSTQNNTDTPKSMSHSESKSRLTS) are disordered. Residues 145-174 (QTPTASVSITPQVTPQTRSTQNNTDTPKSM) show a composition bias toward polar residues. Residues 240–262 (WLTEALYVSIGLGALTISGYLAY) form a helical membrane-spanning segment.

The protein resides in the membrane. Plays a role in the regulation of lifespan in a partially daf-16-mediated manner, and may be involved in regulating the levels of reactive oxygen species production in response to heat stress. This is Mitochondrial scaffolding protein 1 from Caenorhabditis elegans.